Consider the following 276-residue polypeptide: F-box/LRR-repeat protein 20 (276 aa).

An F-box domain is found at 22 to 68 (AVINKKLPKELLLRIFSFLDVVTLCRCAQVSRAWNVLALDGSNWQRI). LRR repeat units lie at residues 74-100 (QRDIEGRVVENISKRCGGFLRKLSLRG), 101-126 (CLGVGDNALRTFAQNCRNIEVLSLNG), 127-152 (CTKTTDATCTSLSKFCSKLRHLDLAS), 153-178 (CTSITNMSLKALSEGCPLLEQLNISW), 179-204 (CDQVTKDGIQALVRGCGGLKALFLKG), 205-230 (CTQLEDEALKYIGAHCPELVTLNLQT), 231-256 (CLQITDEGLITICRGCHKLQSLCASG), and 257-276 (CSNITDAILNALGQNCPRLR).

In terms of assembly, interacts with SKP1 and CUL1. Widely expressed, with highest expression in skeletal muscle, heart and brain.

The protein resides in the cytoplasm. In terms of biological role, substrate-recognition component of the SCF (SKP1-CUL1-F-box protein)-type E3 ubiquitin ligase complex. Role in neural transmission. This chain is F-box/LRR-repeat protein 20 (Fbxl20), found in Rattus norvegicus (Rat).